The following is a 365-amino-acid chain: Phospho-N-acetylmuramoyl-pentapeptide-transferase (365 aa).

The next 10 helical transmembrane spans lie at 15 to 35 (PSGTQLLGLLSVLLVGLAVLI), 51 to 71 (VPVLVSAIVAGIFGMWIVPLL), 96 to 116 (TMGGLIFLPVGLAAGVIFAGF), 121 to 141 (IAVALVTLAYGVIGWVDDWQV), 156 to 176 (LILQIAIAVVFCIWLALTAPE), 180 to 200 (ITFFAGLSLPLGVFFWALAGF), 217 to 237 (GLAGGTGAIAFLGVGALALPA), 238 to 258 (HPGLSLLCACLSGACLGFIYH), 279 to 299 (LAAAGILSGNIWGLLIISGIF), and 344 to 364 (TQIVGAFYLINLGLVLLSFIL).

It belongs to the glycosyltransferase 4 family. MraY subfamily. Requires Mg(2+) as cofactor.

It is found in the cell inner membrane. It carries out the reaction UDP-N-acetyl-alpha-D-muramoyl-L-alanyl-gamma-D-glutamyl-meso-2,6-diaminopimeloyl-D-alanyl-D-alanine + di-trans,octa-cis-undecaprenyl phosphate = di-trans,octa-cis-undecaprenyl diphospho-N-acetyl-alpha-D-muramoyl-L-alanyl-D-glutamyl-meso-2,6-diaminopimeloyl-D-alanyl-D-alanine + UMP. It participates in cell wall biogenesis; peptidoglycan biosynthesis. In terms of biological role, catalyzes the initial step of the lipid cycle reactions in the biosynthesis of the cell wall peptidoglycan: transfers peptidoglycan precursor phospho-MurNAc-pentapeptide from UDP-MurNAc-pentapeptide onto the lipid carrier undecaprenyl phosphate, yielding undecaprenyl-pyrophosphoryl-MurNAc-pentapeptide, known as lipid I. This is Phospho-N-acetylmuramoyl-pentapeptide-transferase from Picosynechococcus sp. (strain ATCC 27264 / PCC 7002 / PR-6) (Agmenellum quadruplicatum).